The sequence spans 145 residues: uncharacterized protein (145 aa).

This is an uncharacterized protein from Methanothrix soehngenii (Methanosaeta concilii).